Here is an 89-residue protein sequence, read N- to C-terminus: Small ribosomal subunit protein uS15 (89 aa).

Positions 1–22 (MALEKEEKSQIINNYQLHETDT) are disordered. Polar residues predominate over residues 10–22 (QIINNYQLHETDT).

Belongs to the universal ribosomal protein uS15 family. In terms of assembly, part of the 30S ribosomal subunit. Forms a bridge to the 50S subunit in the 70S ribosome, contacting the 23S rRNA.

One of the primary rRNA binding proteins, it binds directly to 16S rRNA where it helps nucleate assembly of the platform of the 30S subunit by binding and bridging several RNA helices of the 16S rRNA. In terms of biological role, forms an intersubunit bridge (bridge B4) with the 23S rRNA of the 50S subunit in the ribosome. The protein is Small ribosomal subunit protein uS15 of Chloroflexus aggregans (strain MD-66 / DSM 9485).